The primary structure comprises 82 residues: MKDMQPFTPVKSYTPFHSRFDPCPPIGKKYYRTPPNLYMTFQPEHMEQFSPMEALRKGTLWKDLYDFYENPYRGGDAHGKKG.

Its function is as follows. The cotJ operon proteins affect spore coat composition. They are either required for the normal formation of the inner layers of the coat or are themselves structural components of the coat. The chain is Protein CotJA (cotJA) from Bacillus subtilis (strain 168).